The primary structure comprises 329 residues: Ribosomal RNA small subunit methyltransferase H (329 aa).

Residues 46–48, Asp65, Phe92, Asp113, and His120 contribute to the S-adenosyl-L-methionine site; that span reads GGH. A disordered region spans residues 295 to 329; it reads RGAERPSPAEVAANPRAASARLRAAEKIRDTREAA. A compositionally biased stretch (basic and acidic residues) spans 317 to 329; it reads RAAEKIRDTREAA.

It belongs to the methyltransferase superfamily. RsmH family.

It localises to the cytoplasm. It catalyses the reaction cytidine(1402) in 16S rRNA + S-adenosyl-L-methionine = N(4)-methylcytidine(1402) in 16S rRNA + S-adenosyl-L-homocysteine + H(+). In terms of biological role, specifically methylates the N4 position of cytidine in position 1402 (C1402) of 16S rRNA. This chain is Ribosomal RNA small subunit methyltransferase H, found in Acidothermus cellulolyticus (strain ATCC 43068 / DSM 8971 / 11B).